Here is a 956-residue protein sequence, read N- to C-terminus: UvrABC system protein A (956 aa).

33–40 (GLSGSGKS) lines the ATP pocket. A C4-type zinc finger spans residues 252–279 (CPYCGFSVGELEPRMFSFNSPFGACPTC). ABC transporter domains follow at residues 309-587 (WRPI…KNSI) and 607-936 (GNGL…KYLK). 639 to 646 (GVSGSGKS) contacts ATP. The C4-type zinc-finger motif lies at 738–764 (CEACKGDGIIKIEMHFLPDVYVPCEVC).

Belongs to the ABC transporter superfamily. UvrA family. Forms a heterotetramer with UvrB during the search for lesions.

Its subcellular location is the cytoplasm. Its function is as follows. The UvrABC repair system catalyzes the recognition and processing of DNA lesions. UvrA is an ATPase and a DNA-binding protein. A damage recognition complex composed of 2 UvrA and 2 UvrB subunits scans DNA for abnormalities. When the presence of a lesion has been verified by UvrB, the UvrA molecules dissociate. The polypeptide is UvrABC system protein A (Listeria monocytogenes serovar 1/2a (strain ATCC BAA-679 / EGD-e)).